The following is a 101-amino-acid chain: NADH-quinone oxidoreductase subunit K (101 aa).

The next 3 membrane-spanning stretches (helical) occupy residues 4-24, 30-50, and 61-81; these read LTHYLVLGALLFGISAMGIFM, LVLLMSIELMLLAVNFNFIAF, and IFVFFVLTVAAAESAIGLAIM.

Belongs to the complex I subunit 4L family. NDH-1 is composed of 14 different subunits. Subunits NuoA, H, J, K, L, M, N constitute the membrane sector of the complex.

It is found in the cell inner membrane. It catalyses the reaction a quinone + NADH + 5 H(+)(in) = a quinol + NAD(+) + 4 H(+)(out). Its function is as follows. NDH-1 shuttles electrons from NADH, via FMN and iron-sulfur (Fe-S) centers, to quinones in the respiratory chain. The immediate electron acceptor for the enzyme in this species is believed to be ubiquinone. Couples the redox reaction to proton translocation (for every two electrons transferred, four hydrogen ions are translocated across the cytoplasmic membrane), and thus conserves the redox energy in a proton gradient. This chain is NADH-quinone oxidoreductase subunit K, found in Neisseria meningitidis serogroup B (strain ATCC BAA-335 / MC58).